The following is a 344-amino-acid chain: Dihydroorotate dehydrogenase (quinone) (344 aa).

Residues 65–69 (AGLDK) and Thr-89 each bind FMN. Lys-69 provides a ligand contact to substrate. Substrate is bound at residue 114–118 (NRLGF). Asn-145 and Asn-178 together coordinate FMN. Asn-178 serves as a coordination point for substrate. The active-site Nucleophile is the Ser-181. A substrate-binding site is contributed by Asn-183. Positions 223 and 251 each coordinate FMN. Residue 252 to 253 (NT) participates in substrate binding. FMN contacts are provided by residues Gly-274, Gly-303, and 324–325 (YT).

The protein belongs to the dihydroorotate dehydrogenase family. Type 2 subfamily. Monomer. FMN serves as cofactor.

It is found in the cell membrane. The enzyme catalyses (S)-dihydroorotate + a quinone = orotate + a quinol. Its pathway is pyrimidine metabolism; UMP biosynthesis via de novo pathway; orotate from (S)-dihydroorotate (quinone route): step 1/1. Its function is as follows. Catalyzes the conversion of dihydroorotate to orotate with quinone as electron acceptor. This is Dihydroorotate dehydrogenase (quinone) from Methylibium petroleiphilum (strain ATCC BAA-1232 / LMG 22953 / PM1).